Reading from the N-terminus, the 89-residue chain is Signal recognition particle 19 kDa protein (89 aa).

Belongs to the SRP19 family. As to quaternary structure, part of the signal recognition particle protein translocation system, which is composed of SRP and FtsY. Archaeal SRP consists of a 7S RNA molecule of 300 nucleotides and two protein subunits: SRP54 and SRP19.

It localises to the cytoplasm. Functionally, involved in targeting and insertion of nascent membrane proteins into the cytoplasmic membrane. Binds directly to 7S RNA and mediates binding of the 54 kDa subunit of the SRP. This chain is Signal recognition particle 19 kDa protein, found in Methanococcus maripaludis (strain C7 / ATCC BAA-1331).